The following is a 130-amino-acid chain: Small ribosomal subunit protein uS8 (130 aa).

Belongs to the universal ribosomal protein uS8 family. Part of the 30S ribosomal subunit. Contacts proteins S5 and S12.

Its function is as follows. One of the primary rRNA binding proteins, it binds directly to 16S rRNA central domain where it helps coordinate assembly of the platform of the 30S subunit. This Photobacterium profundum (strain SS9) protein is Small ribosomal subunit protein uS8.